A 232-amino-acid polypeptide reads, in one-letter code: MSKLTKNQKLALGKIEAGKAYTLKEASALVKEITTTKFDASVDVDVRLGVDPRKANQMVRGVVSLPHGTGKQVRVLALCTPDKEAEATAAGADYVGLDEYINKIKGGWTDIDVIITMPSIMGKIGALGRVLGPRGLMPNPKSGTVTNEIGNAVKEVKQGKIDFKVDKSGIVHTSVGKVSFTPEQIRDNAKEFISTLIKLKPTAAKGAYIKSIYLSSTMSAGIKIDPKSVEEN.

This sequence belongs to the universal ribosomal protein uL1 family. In terms of assembly, part of the 50S ribosomal subunit.

Its function is as follows. Binds directly to 23S rRNA. The L1 stalk is quite mobile in the ribosome, and is involved in E site tRNA release. In terms of biological role, protein L1 is also a translational repressor protein, it controls the translation of the L11 operon by binding to its mRNA. This is Large ribosomal subunit protein uL1 from Parabacteroides distasonis (strain ATCC 8503 / DSM 20701 / CIP 104284 / JCM 5825 / NCTC 11152).